The primary structure comprises 236 residues: CD81 antigen (236 aa).

The Cytoplasmic segment spans residues 1-12; the sequence is MGVEGCTKCIKY. The chain crosses the membrane as a helical span at residues 13 to 33; it reads LLFVFNFVFWLAGGVILGVAL. The Extracellular portion of the chain corresponds to 34 to 63; that stretch reads WLRHDPQTTNLLYLELGDRPAPNTFYVGIY. A helical transmembrane segment spans residues 64–84; that stretch reads ILIAVGAVMMFVGFLGCYGAI. The Cytoplasmic segment spans residues 85 to 89; the sequence is QESQC. Residues 90 to 112 traverse the membrane as a helical segment; sequence LLGTFFTCLVILFACEVAAGIWG. Residues 113–201 are Extracellular-facing; sequence FVNKDQIAKD…GKIDELFSGK (89 aa). Cystine bridges form between C156–C190 and C157–C175. The helical transmembrane segment at 202-224 threads the bilayer; it reads LYLIGIAAIVVAVIMIFEMILSM. Residue E219 participates in cholesterol binding. Topologically, residues 225-236 are cytoplasmic; sequence VLCCGIRNSSVY.

The protein belongs to the tetraspanin (TM4SF) family. Homodimer. Part of a complex composed of CD19, CR2/CD21, CD81 and IFITM1/CD225 in the membrane of mature B cells. Interacts (via the second extracellular domain) with CD19; this interaction is initiated early during biosynthesis in the ER and enables trafficking of only properly folded CD19. Part of a complex that includes MHC class II/HLA-DR molecules and IFITM1. Interacts with IFITM1. Interacts with IFITM2 and IFITM3. Part of integrin-tetraspanin complex composed of CD9, CD81, beta-1 and beta-2 integrins in the membrane of monocyte/macrophages. Interacts (via the second extracellular domain) with integrin ITGAV:ITGB3. Interacts with CD247/CD3 zeta, ICAM1 and CD9 at the immune synapse on T cell membrane. Part of a GPCR-tetraspanin complex consisting at least of ADGRG1, CD81, possibly CD9, and GNA11 in which CD81 enhances the association of ADGRG1 with GNA11. Part of a complex composed of CD9, CD81, PTGFRN and IGSF8. Interacts directly with IGSF8. Interacts with CD53 and SCIMP. Interacts with SAMHD1 (via its C-terminus). Interacts with glypican GPC3 and with the transcriptional repressor HHEX; binding to GPC3 decreases the availability of free CD81 for binding to HHEX, resulting in nuclear translocation of HHEX and transcriptional repression. Interacts with CLDN1. Interacts with CLDN6 and CLDN9. Post-translationally, not glycosylated. Likely constitutively palmitoylated at low levels. Protein palmitoylation is up-regulated upon coligation of BCR and CD9-C2R-CD81 complexes in lipid rafts.

The protein resides in the cell membrane. Its subcellular location is the basolateral cell membrane. Its function is as follows. Structural component of specialized membrane microdomains known as tetraspanin-enriched microdomains (TERMs), which act as platforms for receptor clustering and signaling. Essential for trafficking and compartmentalization of CD19 receptor on the surface of activated B cells. Upon initial encounter with microbial pathogens, enables the assembly of CD19-CR2/CD21 and B cell receptor (BCR) complexes at signaling TERMs, lowering the threshold dose of antigen required to trigger B cell clonal expansion and antibody production. In T cells, facilitates the localization of CD247/CD3 zeta at antigen-induced synapses with B cells, providing for costimulation and polarization toward T helper type 2 phenotype. Present in MHC class II compartments, may also play a role in antigen presentation. Can act both as positive and negative regulator of homotypic or heterotypic cell-cell fusion processes. Positively regulates sperm-egg fusion and may be involved in acrosome reaction. In myoblasts, associates with CD9 and PTGFRN and inhibits myotube fusion during muscle regeneration. In macrophages, associates with CD9 and beta-1 and beta-2 integrins, and prevents macrophage fusion into multinucleated giant cells specialized in ingesting complement-opsonized large particles. Also prevents the fusion of mononuclear cell progenitors into osteoclasts in charge of bone resorption. May regulate the compartmentalization of enzymatic activities. In T cells, defines the subcellular localization of dNTPase SAMHD1 and permits its degradation by the proteasome, thereby controlling intracellular dNTP levels. Also involved in cell adhesion and motility. Positively regulates integrin-mediated adhesion of macrophages, particularly relevant for the inflammatory response in the lung. The chain is CD81 antigen (CD81) from Bos taurus (Bovine).